The sequence spans 165 residues: Protein SprT (165 aa).

Positions 20 to 163 (ENLAQANLKL…RCVHCGEPLV (144 aa)) constitute a SprT-like domain. Residue His78 coordinates Zn(2+). Glu79 is an active-site residue. His82 contacts Zn(2+).

It belongs to the SprT family. It depends on Zn(2+) as a cofactor.

Its subcellular location is the cytoplasm. This chain is Protein SprT, found in Salmonella arizonae (strain ATCC BAA-731 / CDC346-86 / RSK2980).